The following is a 485-amino-acid chain: Cytochrome P450 monooxygenase tndB (485 aa).

Residues 20 to 40 (VYGISAVIAVGLAIYSASLAI) traverse the membrane as a helical segment. Cys481 provides a ligand contact to heme.

It belongs to the cytochrome P450 family. Requires heme as cofactor.

It is found in the membrane. It functions in the pathway secondary metabolite biosynthesis; terpenoid biosynthesis. Cytochrome P450 monooxygenase; part of the gene cluster that mediates the biosynthesis of talaronoid C, a fusicoccane diterpenoid with an unprecedented tricyclic 5/8/6 ring system. The first step in the pathway is performed by the fusicoccadiene synthase tndC that possesses both prenyl transferase and terpene cyclase activity, converting isopentenyl diphosphate and dimethylallyl diphosphate into geranylgeranyl diphosphate (GGDP) and further converting GGDP into talarodiene, a precursor for talaronoid C. The remaining enzymes from the cluster include the cytochrome P450 monooxygenase tndB, the aldehyde reductase tndE and the alcohol dehydrogenase tndF that are involved in the conversion of talarodiene into talaronoid C. This chain is Cytochrome P450 monooxygenase tndB, found in Aspergillus flavipes.